The sequence spans 96 residues: Complement inhibitor RaCI4 (96 aa).

Residues 1 to 24 form the signal peptide; it reads MSAFNIFALVVVVCALMINECCTS. 3 disulfides stabilise this stretch: C37-C61, C42-C63, and C57-C78.

It belongs to the RaCI family. Expressed in salivary glands.

The protein resides in the secreted. In terms of biological role, complement inhibitor. Prevents complement-mediated C5 activation by binding to C5. Binds C5 at a different binding site than the other tick complement inhibitors OmCI and CirpT1, and the drug eculizumab. Inhibits complement in human and guinea pig but not in other species tested (rabbit, rat, mouse, and pig). The sequence is that of Complement inhibitor RaCI4 from Hyalomma rufipes (Tick).